The chain runs to 98 residues: Co-chaperonin GroES (98 aa).

Belongs to the GroES chaperonin family. As to quaternary structure, heptamer of 7 subunits arranged in a ring. Interacts with the chaperonin GroEL.

The protein resides in the cytoplasm. Functionally, together with the chaperonin GroEL, plays an essential role in assisting protein folding. The GroEL-GroES system forms a nano-cage that allows encapsulation of the non-native substrate proteins and provides a physical environment optimized to promote and accelerate protein folding. GroES binds to the apical surface of the GroEL ring, thereby capping the opening of the GroEL channel. This is Co-chaperonin GroES from Micrococcus luteus (strain ATCC 4698 / DSM 20030 / JCM 1464 / CCM 169 / CCUG 5858 / IAM 1056 / NBRC 3333 / NCIMB 9278 / NCTC 2665 / VKM Ac-2230) (Micrococcus lysodeikticus).